A 265-amino-acid polypeptide reads, in one-letter code: Hydroxyethylthiazole kinase (265 aa).

Met36 provides a ligand contact to substrate. ATP is bound by residues Lys112 and Ser160. Position 187 (Gly187) interacts with substrate.

Belongs to the Thz kinase family. The cofactor is Mg(2+).

The catalysed reaction is 5-(2-hydroxyethyl)-4-methylthiazole + ATP = 4-methyl-5-(2-phosphooxyethyl)-thiazole + ADP + H(+). Its pathway is cofactor biosynthesis; thiamine diphosphate biosynthesis; 4-methyl-5-(2-phosphoethyl)-thiazole from 5-(2-hydroxyethyl)-4-methylthiazole: step 1/1. In terms of biological role, catalyzes the phosphorylation of the hydroxyl group of 4-methyl-5-beta-hydroxyethylthiazole (THZ). In Clostridium perfringens (strain ATCC 13124 / DSM 756 / JCM 1290 / NCIMB 6125 / NCTC 8237 / Type A), this protein is Hydroxyethylthiazole kinase.